A 46-amino-acid chain; its full sequence is Large ribosomal subunit protein bL33A (46 aa).

The protein belongs to the bacterial ribosomal protein bL33 family.

The sequence is that of Large ribosomal subunit protein bL33A from Mesomycoplasma hyopneumoniae (strain 7448) (Mycoplasma hyopneumoniae).